Here is a 485-residue protein sequence, read N- to C-terminus: Glutamyl-tRNA(Gln) amidotransferase subunit A (485 aa).

Catalysis depends on charge relay system residues Lys-79 and Ser-154. The active-site Acyl-ester intermediate is the Ser-178.

This sequence belongs to the amidase family. GatA subfamily. In terms of assembly, heterotrimer of A, B and C subunits.

It carries out the reaction L-glutamyl-tRNA(Gln) + L-glutamine + ATP + H2O = L-glutaminyl-tRNA(Gln) + L-glutamate + ADP + phosphate + H(+). Its function is as follows. Allows the formation of correctly charged Gln-tRNA(Gln) through the transamidation of misacylated Glu-tRNA(Gln) in organisms which lack glutaminyl-tRNA synthetase. The reaction takes place in the presence of glutamine and ATP through an activated gamma-phospho-Glu-tRNA(Gln). In Staphylococcus aureus (strain USA300 / TCH1516), this protein is Glutamyl-tRNA(Gln) amidotransferase subunit A.